A 255-amino-acid polypeptide reads, in one-letter code: Indole-3-glycerol phosphate synthase (255 aa).

This sequence belongs to the TrpC family.

The catalysed reaction is 1-(2-carboxyphenylamino)-1-deoxy-D-ribulose 5-phosphate + H(+) = (1S,2R)-1-C-(indol-3-yl)glycerol 3-phosphate + CO2 + H2O. It participates in amino-acid biosynthesis; L-tryptophan biosynthesis; L-tryptophan from chorismate: step 4/5. This Streptococcus thermophilus (strain ATCC BAA-250 / LMG 18311) protein is Indole-3-glycerol phosphate synthase.